The following is a 396-amino-acid chain: MTATVLLEVPFSARGDRIPDAVAELRTREPIRKVRTITGAEAWLVSSYALCTQVLEDRRFSMKETAAAGAPRLNALTVPPEVVNNMGNIADAGLRKAVMKAITPKAPGLEQFLRDTANSLLDNLITEGAPADLRNDFADPLATALHCKVLGIPQEDGPKLFRSLSIAFMSSADPIPAAKINWDRDIEYMAGILENPNITTGLMGELSRLRKDPAYSHVSDELFATIGVTFFGAGVISTGSFLTTALISLIQRPQLRNLLHEKPELIPAGVEELLRINLSFADGLPRLATADIQVGDVLVRKGELVLVLLEGANFDPEHFPNPGSIELDRPNPTSHLAFGRGQHFCPGSALGRRHAQIGIEALLKKMPGVDLAVPIDQLVWRTRFQRRIPERLPVLW.

Cysteine 345 is a heme binding site.

It belongs to the cytochrome P450 family. Heme is required as a cofactor.

The protein resides in the cytoplasm. The chain is Cytochrome P450 121 (cyp121) from Mycobacterium bovis (strain ATCC BAA-935 / AF2122/97).